Reading from the N-terminus, the 398-residue chain is 1-deoxy-D-xylulose 5-phosphate reductoisomerase (398 aa).

Thr-10, Gly-11, Ser-12, Ile-13, Gly-36, Lys-37, Asn-38, and Asn-124 together coordinate NADPH. Residue Lys-125 coordinates 1-deoxy-D-xylulose 5-phosphate. Glu-126 lines the NADPH pocket. Asp-150 is a Mn(2+) binding site. 1-deoxy-D-xylulose 5-phosphate is bound by residues Ser-151, Glu-152, Ser-186, and His-209. Residue Glu-152 participates in Mn(2+) binding. Gly-215 is a binding site for NADPH. 4 residues coordinate 1-deoxy-D-xylulose 5-phosphate: Ser-222, Asn-227, Lys-228, and Glu-231. A Mn(2+)-binding site is contributed by Glu-231.

This sequence belongs to the DXR family. In terms of assembly, homodimer. The cofactor is Mg(2+). Requires Mn(2+) as cofactor. It depends on Co(2+) as a cofactor.

The catalysed reaction is 2-C-methyl-D-erythritol 4-phosphate + NADP(+) = 1-deoxy-D-xylulose 5-phosphate + NADPH + H(+). Its pathway is isoprenoid biosynthesis; isopentenyl diphosphate biosynthesis via DXP pathway; isopentenyl diphosphate from 1-deoxy-D-xylulose 5-phosphate: step 1/6. Its activity is regulated as follows. Inhibited by fosmidomycin. Functionally, catalyzes the NADPH-dependent rearrangement and reduction of 1-deoxy-D-xylulose-5-phosphate (DXP) to 2-C-methyl-D-erythritol 4-phosphate (MEP). This chain is 1-deoxy-D-xylulose 5-phosphate reductoisomerase (dxr), found in Escherichia coli (strain K12).